The following is a 183-amino-acid chain: dCTP deaminase (183 aa).

DCTP-binding positions include 106–111, 130–132, Gln-151, Tyr-165, and Gln-175; these read KSTYAR and TLE. Glu-132 functions as the Proton donor/acceptor in the catalytic mechanism.

This sequence belongs to the dCTP deaminase family. Homotrimer.

The catalysed reaction is dCTP + H2O + H(+) = dUTP + NH4(+). The protein operates within pyrimidine metabolism; dUMP biosynthesis; dUMP from dCTP (dUTP route): step 1/2. In terms of biological role, catalyzes the deamination of dCTP to dUTP. The protein is dCTP deaminase of Acidobacterium capsulatum (strain ATCC 51196 / DSM 11244 / BCRC 80197 / JCM 7670 / NBRC 15755 / NCIMB 13165 / 161).